Here is a 677-residue protein sequence, read N- to C-terminus: AP-2 complex subunit beta (677 aa).

Positions 597 to 677 (RLRTRDSNPS…PMTPETHLMD (81 aa)) are disordered. Basic residues predominate over residues 616–627 (KKYNHFHQKSQT). The span at 636–654 (RNSWNPSPFSDESNSNTFS) shows a compositional bias: polar residues.

The protein belongs to the adaptor complexes large subunit family. As to quaternary structure, adaptor protein complex 2 (AP-2) is a heterotetramer composed of two large adaptins (alpha-type subunit apl3 and beta-type subunit apl1), a medium chain (mu-type subunit apm4) and a small adaptin (sigma-type subunit aps2).

The protein localises to the cell membrane. It is found in the membrane. Its subcellular location is the coated pit. In terms of biological role, adaptins are components of the adaptor complexes which link clathrin to receptors in coated vesicles. Clathrin-associated protein complexes are believed to interact with the cytoplasmic tails of membrane proteins, leading to their selection and concentration. Beta adaptin is a subunit of the plasma membrane adaptor. The protein is AP-2 complex subunit beta (apl1) of Schizosaccharomyces pombe (strain 972 / ATCC 24843) (Fission yeast).